The sequence spans 546 residues: Casein kinase I homolog 2 (546 aa).

Polar residues-rich tracts occupy residues 1-33 (MSQV…SNVR) and 44-55 (HVSSNLNHNTGN). The segment at 1 to 67 (MSQVQSPLTA…ASYSGSQSRD (67 aa)) is disordered. N-acetylserine is present on S2. Residues 76–360 (YKIGKKIGEG…ETADGQYDWM (285 aa)) form the Protein kinase domain. ATP contacts are provided by residues 82-90 (IGEGSFGVL) and K105. Residue D195 is the Proton acceptor of the active site. Disordered stretches follow at residues 373–425 (NKKP…QAQA) and 443–546 (QQAN…LGCC). Residues 412-425 (QQQQQQQAQAQAQA) show a composition bias toward low complexity. Positions 453–465 (DDSHYDEEREASK) are enriched in basic and acidic residues. A Phosphoserine modification is found at S455. K465 is covalently cross-linked (Glycyl lysine isopeptide (Lys-Gly) (interchain with G-Cter in ubiquitin)). Positions 475–496 (QQQTQQKYAQQQQKQMQQKSKQ) are enriched in low complexity. The segment covering 497–530 (FANTGANGQTNKYPYNAQPTANDEQNAKNAAQDR) has biased composition (polar residues). Residues 533–546 (NKSSKGFFSKLGCC) show a composition bias toward low complexity. 2 S-palmitoyl cysteine lipidation sites follow: C545 and C546.

Belongs to the protein kinase superfamily. CK1 Ser/Thr protein kinase family. Casein kinase I subfamily. Palmitoylated by AKR1, which is required for proper plasma membrane localization of YCK2.

The protein resides in the cell membrane. It carries out the reaction L-seryl-[protein] + ATP = O-phospho-L-seryl-[protein] + ADP + H(+). It catalyses the reaction L-threonyl-[protein] + ATP = O-phospho-L-threonyl-[protein] + ADP + H(+). In terms of biological role, casein kinases are operationally defined by their preferential utilization of acidic proteins such as caseins as substrates. The sequence is that of Casein kinase I homolog 2 (YCK2) from Saccharomyces cerevisiae (strain ATCC 204508 / S288c) (Baker's yeast).